A 1127-amino-acid polypeptide reads, in one-letter code: E3 ubiquitin-protein ligase TRIM33 (1127 aa).

Residues 1–18 show a composition bias toward gly residues; it reads MAENKGGGEAESGGGGSG. The tract at residues 1 to 118 is disordered; the sequence is MAENKGGGEA…PSAGPPPGPP (118 aa). The necessary for E3 ubiquitin-protein ligase activity and repression of SMAD4 signaling and transcriptional repression stretch occupies residues 1–147; sequence MAENKGGGEA…AEPKLLPCLH (147 aa). Low complexity predominate over residues 19 to 37; sequence SAPVTAGAAGPAAQEAEPP. Residues 52–64 show a composition bias toward gly residues; it reads RAGAEGGAAGPDD. Positions 65–97 are enriched in low complexity; that stretch reads GGVAAASSGSAQAASSPAASVGTGVAGGAVSTP. The span at 98-118 shows a compositional bias: pro residues; sequence APAPASAPAPGPSAGPPPGPP. The RING-type zinc-finger motif lies at 125-154; the sequence is CAVCQQSLQSRREAEPKLLPCLHSFCLRCL. 2 B box-type zinc fingers span residues 212 to 259 and 271 to 312; these read KSEQ…IRKK and QRPV…YQFL. Residues Cys-217, Cys-220, Cys-241, His-245, Cys-276, His-279, Cys-299, and His-304 each coordinate Zn(2+). The segment at 299–401 is necessary for oligomerization; it reads CQLLEHKEHR…QMKLLQQQND (103 aa). The stretch at 299–401 forms a coiled coil; it reads CQLLEHKEHR…QMKLLQQQND (103 aa). Residues Lys-329, Lys-334, Lys-481, and Lys-504 each participate in a glycyl lysine isopeptide (Lys-Gly) (interchain with G-Cter in SUMO2) cross-link. Position 515 is an asymmetric dimethylarginine; alternate (Arg-515). An Omega-N-methylarginine; alternate modification is found at Arg-515. Lys-527 is covalently cross-linked (Glycyl lysine isopeptide (Lys-Gly) (interchain with G-Cter in SUMO2)). Residue Arg-535 is modified to Omega-N-methylarginine. Residues 536–563 form a disordered region; that stretch reads MQQPPAPVPTTTTTTQQHPRQAAPQMLQ. Arg-577 bears the Asymmetric dimethylarginine mark. Asymmetric dimethylarginine; alternate is present on Arg-591. The residue at position 591 (Arg-591) is an Omega-N-methylarginine; alternate. Residues Arg-598 and Arg-604 each carry the asymmetric dimethylarginine modification. Disordered regions lie at residues 608–629, 673–692, and 703–818; these read PQYS…HAGP, NPEN…EDAG, and YISG…TPPL. The segment covering 723-759 has biased composition (low complexity); sequence PSALSPGSSGLSNSHTPVRPPSTSSTGSRGSCGSSGR. N6-acetyllysine; alternate is present on residues Lys-763 and Lys-769. Residues Lys-763 and Lys-769 each participate in a glycyl lysine isopeptide (Lys-Gly) (interchain with G-Cter in SUMO2); alternate cross-link. Lys-774 participates in a covalent cross-link: Glycyl lysine isopeptide (Lys-Gly) (interchain with G-Cter in SUMO2). Glycyl lysine isopeptide (Lys-Gly) (interchain with G-Cter in SUMO2); alternate cross-links involve residues Lys-776 and Lys-793. Residues Lys-776 and Lys-793 each participate in a glycyl lysine isopeptide (Lys-Gly) (interchain with G-Cter in SUMO1); alternate cross-link. Lys-793 carries the post-translational modification N6-acetyllysine; alternate. The span at 793–802 shows a compositional bias: basic and acidic residues; it reads KQEKTEDGRR. A Glycyl lysine isopeptide (Lys-Gly) (interchain with G-Cter in SUMO2) cross-link involves residue Lys-796. Ser-803 carries the post-translational modification Phosphoserine. The span at 807-818 shows a compositional bias: low complexity; that stretch reads LSSPESSLTPPL. Position 815 is a phosphothreonine (Thr-815). A Glycyl lysine isopeptide (Lys-Gly) (interchain with G-Cter in SUMO2) cross-link involves residue Lys-861. The residue at position 862 (Ser-862) is a Phosphoserine. A PHD-type zinc finger spans residues 887–934; the sequence is EDWCAVCQNGGDLLCCEKCPKVFHLTCHVPTLLSFPSGDWICTFCRDI. At Lys-951 the chain carries N6-acetyllysine. The residue at position 953 (Lys-953) is an N6-acetyllysine; alternate. Residue Lys-953 forms a Glycyl lysine isopeptide (Lys-Gly) (interchain with G-Cter in SUMO2); alternate linkage. Residues 957 to 1080 form the Bromo domain; sequence GLSPVDQRKC…LYFEDKLTEI (124 aa). Glycyl lysine isopeptide (Lys-Gly) (interchain with G-Cter in SUMO2) cross-links involve residues Lys-1007 and Lys-1043. Phosphothreonine is present on Thr-1051. Residue Lys-1057 forms a Glycyl lysine isopeptide (Lys-Gly) (interchain with G-Cter in SUMO2) linkage. The tract at residues 1088–1127 is disordered; sequence PLPEFEQEEDDGEVTEDSDEDFIQPRRKRLKSDERPVHIK. The segment covering 1092–1109 has biased composition (acidic residues); the sequence is FEQEEDDGEVTEDSDEDF. The residue at position 1102 (Thr-1102) is a Phosphothreonine. At Ser-1105 the chain carries Phosphoserine. Lys-1118 is covalently cross-linked (Glycyl lysine isopeptide (Lys-Gly) (interchain with G-Cter in SUMO2)). The segment covering 1118 to 1127 has biased composition (basic and acidic residues); the sequence is KSDERPVHIK. A Phosphoserine modification is found at Ser-1119.

Belongs to the TRIM/RBCC family. As to quaternary structure, homooligomer and heterooligomer with TRIM24 and TRIM28 family members. Interacts with SMAD4 in unstimulated cells. Found in a complex with SMAD2 and SMAD3 upon addition of TGF-beta. Interacts with SMAD2 and SMAD3. Interacts with SMAD4 under basal and induced conditions and, upon TGF-beta signaling, with activated SMAD2. Forms a ternary complex with SMAD4 and SMAD2 upon TGF-beta signaling. In terms of processing, sumoylated with SUMO1. As to expression, expressed in stem cells at the bottom of the crypts of the colon (at protein level). Expressed in colon adenomas and adenocarcinomas (at protein level). Expressed in brain, lung, liver, spleen, thymus, prostate, kidney, testis, heart, placenta, pancreas, small intestine, ovary, colon, skeletal muscle and hematopoietic progenitors.

The protein resides in the nucleus. It carries out the reaction S-ubiquitinyl-[E2 ubiquitin-conjugating enzyme]-L-cysteine + [acceptor protein]-L-lysine = [E2 ubiquitin-conjugating enzyme]-L-cysteine + N(6)-ubiquitinyl-[acceptor protein]-L-lysine.. The protein operates within protein modification; protein ubiquitination. Functionally, acts as an E3 ubiquitin-protein ligase. Promotes SMAD4 ubiquitination, nuclear exclusion and degradation via the ubiquitin proteasome pathway. According to PubMed:16751102, does not promote a decrease in the level of endogenous SMAD4. May act as a transcriptional repressor. Inhibits the transcriptional response to TGF-beta/BMP signaling cascade. Plays a role in the control of cell proliferation. Its association with SMAD2 and SMAD3 stimulates erythroid differentiation of hematopoietic stem/progenitor. Monoubiquitinates SMAD4 and acts as an inhibitor of SMAD4-dependent TGF-beta/BMP signaling cascade (Monoubiquitination of SMAD4 hampers its ability to form a stable complex with activated SMAD2/3 resulting in inhibition of TGF-beta/BMP signaling cascade). In Homo sapiens (Human), this protein is E3 ubiquitin-protein ligase TRIM33 (TRIM33).